A 443-amino-acid polypeptide reads, in one-letter code: Histidinol dehydrogenase (443 aa).

Residues Y133, Q191, and N214 each contribute to the NAD(+) site. Substrate is bound by residues S240, Q262, and H265. 2 residues coordinate Zn(2+): Q262 and H265. Active-site proton acceptor residues include E329 and H330. H330, D363, E417, and H422 together coordinate substrate. D363 contributes to the Zn(2+) binding site. H422 contributes to the Zn(2+) binding site.

Belongs to the histidinol dehydrogenase family. In terms of assembly, homodimer. The cofactor is Zn(2+).

It catalyses the reaction L-histidinol + 2 NAD(+) + H2O = L-histidine + 2 NADH + 3 H(+). It participates in amino-acid biosynthesis; L-histidine biosynthesis; L-histidine from 5-phospho-alpha-D-ribose 1-diphosphate: step 9/9. In terms of biological role, catalyzes the sequential NAD-dependent oxidations of L-histidinol to L-histidinaldehyde and then to L-histidine. The sequence is that of Histidinol dehydrogenase from Yersinia pestis.